A 136-amino-acid chain; its full sequence is Fluoride-specific ion channel FluC (136 aa).

4 helical membrane-spanning segments follow: residues 3 to 23, 46 to 66, 78 to 98, and 109 to 129; these read TLPP…GAVL, ATLA…GVLF, LLIG…SLEV, and FAAL…VFGL. 2 residues coordinate Na(+): Gly-86 and Thr-89.

Belongs to the fluoride channel Fluc/FEX (TC 1.A.43) family.

The protein resides in the cell inner membrane. It catalyses the reaction fluoride(in) = fluoride(out). Na(+) is not transported, but it plays an essential structural role and its presence is essential for fluoride channel function. Its function is as follows. Fluoride-specific ion channel. Important for reducing fluoride concentration in the cell, thus reducing its toxicity. This chain is Fluoride-specific ion channel FluC, found in Erythrobacter litoralis (strain HTCC2594).